Consider the following 285-residue polypeptide: Acetylglutamate kinase (285 aa).

Substrate-binding positions include 64 to 65, Arg86, and Asn180; that span reads GG.

Belongs to the acetylglutamate kinase family. ArgB subfamily.

The protein localises to the plastid. It localises to the chloroplast. The enzyme catalyses N-acetyl-L-glutamate + ATP = N-acetyl-L-glutamyl 5-phosphate + ADP. It participates in amino-acid biosynthesis; L-arginine biosynthesis; N(2)-acetyl-L-ornithine from L-glutamate: step 2/4. In terms of biological role, catalyzes the ATP-dependent phosphorylation of N-acetyl-L-glutamate. The protein is Acetylglutamate kinase of Gracilaria tenuistipitata var. liui (Red alga).